Reading from the N-terminus, the 128-residue chain is Early E3 14.5 kDa protein (128 aa).

The protein belongs to the adenoviridae E3_15 family.

Functionally, protects virus-infected cells from TNF-induced cytolysis. The polypeptide is Early E3 14.5 kDa protein (Human adenovirus C serotype 5 (HAdV-5)).